Reading from the N-terminus, the 471-residue chain is Dynein regulatory complex subunit 4 (471 aa).

Residues 1-24 (MAPKKKGTKKESKKDAVATGDIEG) form a disordered region. Coiled coils occupy residues 23–239 (EGAS…YNDI) and 282–425 (LSRA…DVAK).

Belongs to the DRC4 family. In terms of assembly, component of the nexin-dynein regulatory complex (N-DRC). Interacts with DRC1, DRC2 and DRC5.

Its subcellular location is the cytoplasm. It is found in the cytoskeleton. It localises to the flagellum axoneme. The protein resides in the flagellum basal body. In terms of biological role, component of the nexin-dynein regulatory complex (N-DRC), a key regulator of ciliary/flagellar motility which maintains the alignment and integrity of the distal axoneme and regulates microtubule sliding in motile axonemes. Plays an important role in the assembly of the N-DRC linker. This Chlamydomonas reinhardtii (Chlamydomonas smithii) protein is Dynein regulatory complex subunit 4.